A 238-amino-acid chain; its full sequence is Fatty acid metabolism regulator protein (238 aa).

An HTH gntR-type domain is found at 6–74 (KGPASFAEKY…HGKPTRVNNF (69 aa)). Residues 34 to 53 (ERELSELIGVTRTTLREVLQ) constitute a DNA-binding region (H-T-H motif).

In terms of assembly, homodimer.

It localises to the cytoplasm. Multifunctional regulator of fatty acid metabolism. The sequence is that of Fatty acid metabolism regulator protein from Shewanella putrefaciens (strain CN-32 / ATCC BAA-453).